The chain runs to 358 residues: Probable D-xylulose reductase A (358 aa).

Zn(2+) contacts are provided by Cys47, His72, and Glu73. 182–187 (GAGPVG) is an NAD(+) binding site.

Belongs to the zinc-containing alcohol dehydrogenase family. It depends on Zn(2+) as a cofactor.

The enzyme catalyses xylitol + NAD(+) = D-xylulose + NADH + H(+). The protein operates within carbohydrate degradation; L-arabinose degradation via L-arabinitol; D-xylulose 5-phosphate from L-arabinose (fungal route): step 4/5. Xylitol dehydrogenase which catalyzes the conversion of xylitol to D-xylulose. Xylose is a major component of hemicelluloses such as xylan. Most fungi utilize D-xylose via three enzymatic reactions, xylose reductase (XR), xylitol dehydrogenase (XDH), and xylulokinase, to form xylulose 5-phosphate, which enters pentose phosphate pathway. The polypeptide is Probable D-xylulose reductase A (xdhA) (Neosartorya fischeri (strain ATCC 1020 / DSM 3700 / CBS 544.65 / FGSC A1164 / JCM 1740 / NRRL 181 / WB 181) (Aspergillus fischerianus)).